We begin with the raw amino-acid sequence, 212 residues long: Thymidylate kinase (212 aa).

Gly-11–Thr-18 is an ATP binding site.

It belongs to the thymidylate kinase family.

It carries out the reaction dTMP + ATP = dTDP + ADP. In terms of biological role, phosphorylation of dTMP to form dTDP in both de novo and salvage pathways of dTTP synthesis. The protein is Thymidylate kinase of Buchnera aphidicola subsp. Baizongia pistaciae (strain Bp).